The following is a 436-amino-acid chain: Phosphomethylpyrimidine synthase (436 aa).

Substrate-binding positions include asparagine 69, methionine 98, tyrosine 127, histidine 163, 185–187 (SRG), 226–229 (DACR), and glutamate 265. Histidine 269 serves as a coordination point for Zn(2+). Residue tyrosine 292 participates in substrate binding. Histidine 333 serves as a coordination point for Zn(2+). 3 residues coordinate [4Fe-4S] cluster: cysteine 409, cysteine 412, and cysteine 416.

It belongs to the ThiC family. It depends on [4Fe-4S] cluster as a cofactor.

The catalysed reaction is 5-amino-1-(5-phospho-beta-D-ribosyl)imidazole + S-adenosyl-L-methionine = 4-amino-2-methyl-5-(phosphooxymethyl)pyrimidine + CO + 5'-deoxyadenosine + formate + L-methionine + 3 H(+). Its pathway is cofactor biosynthesis; thiamine diphosphate biosynthesis. Catalyzes the synthesis of the hydroxymethylpyrimidine phosphate (HMP-P) moiety of thiamine from aminoimidazole ribotide (AIR) in a radical S-adenosyl-L-methionine (SAM)-dependent reaction. The chain is Phosphomethylpyrimidine synthase from Clostridium perfringens (strain ATCC 13124 / DSM 756 / JCM 1290 / NCIMB 6125 / NCTC 8237 / Type A).